Consider the following 208-residue polypeptide: 2-phospho-L-lactate guanylyltransferase (208 aa).

It belongs to the CofC family. As to quaternary structure, homodimer.

The enzyme catalyses (2S)-2-phospholactate + GTP + H(+) = (2S)-lactyl-2-diphospho-5'-guanosine + diphosphate. Its pathway is cofactor biosynthesis; coenzyme F420 biosynthesis. In terms of biological role, guanylyltransferase that catalyzes the activation of (2S)-2-phospholactate (2-PL) as (2S)-lactyl-2-diphospho-5'-guanosine, via the condensation of 2-PL with GTP. It is involved in the biosynthesis of coenzyme F420, a hydride carrier cofactor. The sequence is that of 2-phospho-L-lactate guanylyltransferase from Methanosarcina barkeri (strain Fusaro / DSM 804).